The following is a 470-amino-acid chain: 1-aminocyclopropane-1-carboxylate synthase 5 (470 aa).

Positions 47 and 85 each coordinate substrate. Lys272 bears the N6-(pyridoxal phosphate)lysine mark. Ser461 is subject to Phosphoserine.

It belongs to the class-I pyridoxal-phosphate-dependent aminotransferase family. Homodimer and heterodimer. In vivo, the relevance of heterodimerization with other ACS enzymes is however unsure. Interacts (via its C-terminal region) with FEI1, FEI2, ETO1, EOL1 and EOL2. Interacts with GRF3. It depends on pyridoxal 5'-phosphate as a cofactor. In terms of processing, may be processed at its C-terminus. Ubiquitinated. The interaction with ETO1 (and possibly EOL1 and EOL2) mediate its proteasome-dependent degradation. Its stability and degradation plays a central role in ethylene biosynthesis. Expressed in roots and siliques.

It catalyses the reaction S-adenosyl-L-methionine = 1-aminocyclopropane-1-carboxylate + S-methyl-5'-thioadenosine + H(+). It participates in alkene biosynthesis; ethylene biosynthesis via S-adenosyl-L-methionine; ethylene from S-adenosyl-L-methionine: step 1/2. In terms of biological role, 1-aminocyclopropane-1-carboxylate synthase (ACS) enzymes catalyze the conversion of S-adenosyl-L-methionine (SAM) into 1-aminocyclopropane-1-carboxylate (ACC), a direct precursor of ethylene. This chain is 1-aminocyclopropane-1-carboxylate synthase 5 (ACS5), found in Arabidopsis thaliana (Mouse-ear cress).